Reading from the N-terminus, the 99-residue chain is Aspartyl/glutamyl-tRNA(Asn/Gln) amidotransferase subunit C (99 aa).

Belongs to the GatC family. Heterotrimer of A, B and C subunits.

It catalyses the reaction L-glutamyl-tRNA(Gln) + L-glutamine + ATP + H2O = L-glutaminyl-tRNA(Gln) + L-glutamate + ADP + phosphate + H(+). The enzyme catalyses L-aspartyl-tRNA(Asn) + L-glutamine + ATP + H2O = L-asparaginyl-tRNA(Asn) + L-glutamate + ADP + phosphate + 2 H(+). Functionally, allows the formation of correctly charged Asn-tRNA(Asn) or Gln-tRNA(Gln) through the transamidation of misacylated Asp-tRNA(Asn) or Glu-tRNA(Gln) in organisms which lack either or both of asparaginyl-tRNA or glutaminyl-tRNA synthetases. The reaction takes place in the presence of glutamine and ATP through an activated phospho-Asp-tRNA(Asn) or phospho-Glu-tRNA(Gln). In Mycolicibacterium vanbaalenii (strain DSM 7251 / JCM 13017 / BCRC 16820 / KCTC 9966 / NRRL B-24157 / PYR-1) (Mycobacterium vanbaalenii), this protein is Aspartyl/glutamyl-tRNA(Asn/Gln) amidotransferase subunit C.